The primary structure comprises 527 residues: Estrogen receptor beta (527 aa).

The tract at residues 1 to 145 (MDVKNSPSSL…SPSSKRDAHF (145 aa)) is modulating. Serine 84 and serine 102 each carry phosphoserine; by MAPK. 2 consecutive NR C4-type zinc fingers follow at residues 146–166 (CAVCSDYASGYHYGVWSCEGC) and 182–206 (CPATNQCTIDKNRRKSCQACRLRKC). A DNA-binding region (nuclear receptor) is located at residues 146–211 (CAVCSDYASG…RLRKCYEVGM (66 aa)). One can recognise an NR LBD domain in the interval 261–495 (SPEQLVLTLL…DLLLEMLNAH (235 aa)). The tract at residues 505 to 527 (TRSERNLAEDSESKEGSQKPQAQ) is disordered. The span at 506-521 (RSERNLAEDSESKEGS) shows a compositional bias: basic and acidic residues.

It belongs to the nuclear hormone receptor family. NR3 subfamily. In terms of assembly, binds DNA as a homodimer. Can form a heterodimer with ESR1. Interacts with NCOA1, NCOA3, NCOA5 and NCOA6 coactivators, leading to a strong increase of transcription of target genes. Interacts with UBE1C and AKAP13. Interacts with DNTTIP2. Interacts with CCDC62 in the presence of estradiol/E2; this interaction seems to enhance the transcription of target genes. Interacts with DNAAF4. Interacts with PRMT2. Interacts with CCAR2 (via N-terminus) in a ligand-independent manner. Interacts with RBM39, in the presence of estradiol (E2). Interacts with STUB1/CHIP. Post-translationally, phosphorylation at Ser-84 and Ser-102 recruits NCOA1.

The protein resides in the nucleus. Its function is as follows. Nuclear hormone receptor. Binds estrogens with an affinity similar to that of ESR1/ER-alpha, and activates expression of reporter genes containing estrogen response elements (ERE) in an estrogen-dependent manner. This Ovis aries (Sheep) protein is Estrogen receptor beta (ESR2).